The chain runs to 468 residues: 3-isopropylmalate dehydratase large subunit (468 aa).

The [4Fe-4S] cluster site is built by cysteine 348, cysteine 409, and cysteine 412.

It belongs to the aconitase/IPM isomerase family. LeuC type 1 subfamily. In terms of assembly, heterodimer of LeuC and LeuD. [4Fe-4S] cluster is required as a cofactor.

It catalyses the reaction (2R,3S)-3-isopropylmalate = (2S)-2-isopropylmalate. Its pathway is amino-acid biosynthesis; L-leucine biosynthesis; L-leucine from 3-methyl-2-oxobutanoate: step 2/4. In terms of biological role, catalyzes the isomerization between 2-isopropylmalate and 3-isopropylmalate, via the formation of 2-isopropylmaleate. The chain is 3-isopropylmalate dehydratase large subunit from Dechloromonas aromatica (strain RCB).